Reading from the N-terminus, the 362-residue chain is Endopolygalacturonase II (362 aa).

The N-terminal stretch at 1–21 is a signal peptide; that stretch reads MHSFASLLAYGLAASATLASA. The propeptide occupies 22–27; that stretch reads SPIEAR. Residues Cys-30 and Cys-45 are joined by a disulfide bond. A PbH1 1 repeat occupies 156–186; it reads ADDITLTDITINNADGDTLGGHNTDAFDVGN. The active-site Proton donor is Asp-201. Cys-203 and Cys-219 are oxidised to a cystine. His-223 is a catalytic residue. PbH1 repeat units follow at residues 238–259, 267–289, and 301–322; these read VKNVTIEHSTVSNSENAVRIKT, VSEITYSNIVMSGISDYGVVIQQ, and TNGVTITDVKLESVTGTVDSKA. The N-linked (GlcNAc...) (high mannose) asparagine glycan is linked to Asn-240. 2 cysteine pairs are disulfide-bonded: Cys-329–Cys-334 and Cys-353–Cys-362.

The protein belongs to the glycosyl hydrolase 28 family.

It is found in the secreted. The enzyme catalyses (1,4-alpha-D-galacturonosyl)n+m + H2O = (1,4-alpha-D-galacturonosyl)n + (1,4-alpha-D-galacturonosyl)m.. Its function is as follows. Involved in maceration and soft-rotting of plant tissue. Hydrolyzes the 1,4-alpha glycosidic bonds of de-esterified pectate in the smooth region of the plant cell wall. The sequence is that of Endopolygalacturonase II from Aspergillus niger.